The following is a 308-amino-acid chain: Mitochondrial brown fat uncoupling protein 1 (308 aa).

Residues 1-10 lie on the Mitochondrial intermembrane side of the membrane; the sequence is MVASAEADVP. The helical transmembrane segment at 11–33 threads the bilayer; the sequence is PPTMLVKIASAGLSACLADIITF. 3 Solcar repeats span residues 11-103, 112-202, and 211-296; these read PPTM…VQEY, ATLG…LKEA, and DDIP…LKKE. At 34–74 the chain is on the mitochondrial matrix side; sequence PLDTAKVRLQVQGERPNAPGVKYKGVLGTIATVAKTEGPLK. Lysine 57 is a binding site for fatty acid 16:0. Residues 75-97 form a helical membrane-spanning segment; the sequence is LYGGLPAGIQRQISFASLRIGLY. Residues 98–117 lie on the Mitochondrial intermembrane side of the membrane; that stretch reads DTVQEYFNAHRKTPATLGNK. Residues 118–134 form a helical membrane-spanning segment; that stretch reads ISAGLMTGCVTVFIGQP. At 135 to 179 the chain is on the mitochondrial matrix side; the sequence is TEVAKVRMQAQSSLHWLKPRYSGTYNAYYVIVKTEGFLGLWKGTS. Residues 180-196 traverse the membrane as a helical segment; it reads LNLTRNVIINCTELVVY. At 197–213 the chain is on the mitochondrial intermembrane side; sequence DVLKEALVKNNVLADDI. The chain crosses the membrane as a helical span at residues 214–233; the sequence is PCHLLAALTAGFCTTALASP. The Mitochondrial matrix portion of the chain corresponds to 234 to 267; the sequence is VDVVKTRFINSPPGYYPHVHNCALNMLQKEGLRA. The residue at position 255 (cysteine 255) is a Cysteine sulfenic acid (-SOH). A helical transmembrane segment spans residues 268-290; that stretch reads FFKGFVPSFLRLGSWTVIMHVTF. Lysine 270 is a fatty acid 16:0 binding site. Residues 291 to 308 are Mitochondrial intermembrane-facing; the sequence is EQLKKELMKSRQTVDCAT.

Belongs to the mitochondrial carrier (TC 2.A.29) family. In terms of assembly, most probably functions as a monomer. Binds one purine nucleotide per monomer. However, has also been suggested to function as a homodimer or a homotetramer. Tightly associates with cardiolipin in the mitochondrion inner membrane; may stabilize and regulate its activity. Post-translationally, may undergo sulfenylation upon cold exposure. May increase the sensitivity of UCP1 thermogenic function to the activation by noradrenaline probably through structural effects. In terms of processing, may undergo ubiquitin-mediated proteasomal degradation. Brown adipose tissue.

It is found in the mitochondrion inner membrane. It carries out the reaction H(+)(in) = H(+)(out). Its activity is regulated as follows. Has no constitutive proton transporter activity and has to be activated by long-chain fatty acids/LCFAs. Inhibited by purine nucleotides. Both purine nucleotides and LCFAs bind the cytosolic side of the transporter and directly compete to activate or inhibit it. Activated by noradrenaline and reactive oxygen species. Despite lacking canonical translational encoding for selenocysteine, a small pool of the protein has been observed to selectively incorporate selenocysteine at 'Cys-255'. Selenocysteine-modified protein is highly sensitive to redox modification and may constitute a pool of protein highly sensitive to activation by elevated levels of reactive oxygen species (ROS). Mitochondrial protein responsible for thermogenic respiration, a specialized capacity of brown adipose tissue and beige fat that participates in non-shivering adaptive thermogenesis to temperature and diet variations and more generally to the regulation of energy balance. Functions as a long-chain fatty acid/LCFA and proton symporter, simultaneously transporting one LCFA and one proton through the inner mitochondrial membrane. However, LCFAs remaining associated with the transporter via their hydrophobic tails, it results in an apparent transport of protons activated by LCFAs. Thereby, dissipates the mitochondrial proton gradient and converts the energy of substrate oxydation into heat instead of ATP. Regulates the production of reactive oxygen species/ROS by mitochondria. The chain is Mitochondrial brown fat uncoupling protein 1 from Suncus murinus (Asian house shrew).